The chain runs to 320 residues: 1-aminocyclopropane-1-carboxylate oxidase (320 aa).

The Fe2OG dioxygenase domain occupies Pro154–Pro254. Fe cation is bound by residues His178, Asp180, and His235.

Belongs to the iron/ascorbate-dependent oxidoreductase family. Requires Fe cation as cofactor.

The catalysed reaction is 1-aminocyclopropane-1-carboxylate + L-ascorbate + O2 = ethene + L-dehydroascorbate + hydrogen cyanide + CO2 + 2 H2O. It functions in the pathway alkene biosynthesis; ethylene biosynthesis via S-adenosyl-L-methionine; ethylene from S-adenosyl-L-methionine: step 2/2. This is 1-aminocyclopropane-1-carboxylate oxidase (ACO) from Persea americana (Avocado).